We begin with the raw amino-acid sequence, 113 residues long: T cell receptor alpha variable 8-3 (113 aa).

The N-terminal stretch at 1-20 (MLLELIPLLGIHFVLRTARA) is a signal peptide. The region spanning 21–113 (QSVTQPDIHI…DAAEYFCAVG (93 aa)) is the Ig-like domain. A disulfide bridge links C42 with C110. N43 carries N-linked (GlcNAc...) asparagine glycosylation.

Alpha-beta TR is a heterodimer composed of an alpha and beta chain; disulfide-linked. The alpha-beta TR is associated with the transmembrane signaling CD3 coreceptor proteins to form the TR-CD3 (TcR or TCR). The assembly of alpha-beta TR heterodimers with CD3 occurs in the endoplasmic reticulum where a single alpha-beta TR heterodimer associates with one CD3D-CD3E heterodimer, one CD3G-CD3E heterodimer and one CD247 homodimer forming a stable octameric structure. CD3D-CD3E and CD3G-CD3E heterodimers preferentially associate with TR alpha and TR beta chains, respectively. The association of the CD247 homodimer is the last step of TcR assembly in the endoplasmic reticulum and is required for transport to the cell surface.

The protein localises to the cell membrane. In terms of biological role, v region of the variable domain of T cell receptor (TR) alpha chain that participates in the antigen recognition. Alpha-beta T cell receptors are antigen specific receptors which are essential to the immune response and are present on the cell surface of T lymphocytes. Recognize peptide-major histocompatibility (MH) (pMH) complexes that are displayed by antigen presenting cells (APC), a prerequisite for efficient T cell adaptive immunity against pathogens. Binding of alpha-beta TR to pMH complex initiates TR-CD3 clustering on the cell surface and intracellular activation of LCK that phosphorylates the ITAM motifs of CD3G, CD3D, CD3E and CD247 enabling the recruitment of ZAP70. In turn ZAP70 phosphorylates LAT, which recruits numerous signaling molecules to form the LAT signalosome. The LAT signalosome propagates signal branching to three major signaling pathways, the calcium, the mitogen-activated protein kinase (MAPK) kinase and the nuclear factor NF-kappa-B (NF-kB) pathways, leading to the mobilization of transcription factors that are critical for gene expression and essential for T cell growth and differentiation. The T cell repertoire is generated in the thymus, by V-(D)-J rearrangement. This repertoire is then shaped by intrathymic selection events to generate a peripheral T cell pool of self-MH restricted, non-autoaggressive T cells. Post-thymic interaction of alpha-beta TR with the pMH complexes shapes TR structural and functional avidity. In Homo sapiens (Human), this protein is T cell receptor alpha variable 8-3.